Reading from the N-terminus, the 281-residue chain is Putative pyruvate, phosphate dikinase regulatory protein (281 aa).

An ADP-binding site is contributed by 153–160; the sequence is GISRTSKT.

It belongs to the pyruvate, phosphate/water dikinase regulatory protein family. PDRP subfamily.

It carries out the reaction N(tele)-phospho-L-histidyl/L-threonyl-[pyruvate, phosphate dikinase] + ADP = N(tele)-phospho-L-histidyl/O-phospho-L-threonyl-[pyruvate, phosphate dikinase] + AMP + H(+). The catalysed reaction is N(tele)-phospho-L-histidyl/O-phospho-L-threonyl-[pyruvate, phosphate dikinase] + phosphate + H(+) = N(tele)-phospho-L-histidyl/L-threonyl-[pyruvate, phosphate dikinase] + diphosphate. Its function is as follows. Bifunctional serine/threonine kinase and phosphorylase involved in the regulation of the pyruvate, phosphate dikinase (PPDK) by catalyzing its phosphorylation/dephosphorylation. In Bdellovibrio bacteriovorus (strain ATCC 15356 / DSM 50701 / NCIMB 9529 / HD100), this protein is Putative pyruvate, phosphate dikinase regulatory protein.